The primary structure comprises 150 residues: 3-hydroxyacyl-[acyl-carrier-protein] dehydratase FabZ (150 aa).

The active site involves H51.

It belongs to the thioester dehydratase family. FabZ subfamily.

The protein localises to the cytoplasm. The catalysed reaction is a (3R)-hydroxyacyl-[ACP] = a (2E)-enoyl-[ACP] + H2O. Its function is as follows. Involved in unsaturated fatty acids biosynthesis. Catalyzes the dehydration of short chain beta-hydroxyacyl-ACPs and long chain saturated and unsaturated beta-hydroxyacyl-ACPs. This is 3-hydroxyacyl-[acyl-carrier-protein] dehydratase FabZ from Legionella pneumophila (strain Paris).